Consider the following 272-residue polypeptide: Putative imidazole glycerol phosphate synthase subunit hisF2 (272 aa).

Residue Asp133 is part of the active site.

It belongs to the HisA/HisF family. As to quaternary structure, heterodimer of HisH and HisF.

It localises to the cytoplasm. It catalyses the reaction 5-[(5-phospho-1-deoxy-D-ribulos-1-ylimino)methylamino]-1-(5-phospho-beta-D-ribosyl)imidazole-4-carboxamide + L-glutamine = D-erythro-1-(imidazol-4-yl)glycerol 3-phosphate + 5-amino-1-(5-phospho-beta-D-ribosyl)imidazole-4-carboxamide + L-glutamate + H(+). It participates in amino-acid biosynthesis; L-histidine biosynthesis; L-histidine from 5-phospho-alpha-D-ribose 1-diphosphate: step 5/9. Functionally, IGPS catalyzes the conversion of PRFAR and glutamine to IGP, AICAR and glutamate. The HisF subunit catalyzes the cyclization activity that produces IGP and AICAR from PRFAR using the ammonia provided by the HisH subunit. This is Putative imidazole glycerol phosphate synthase subunit hisF2 (hisF2) from Vibrio vulnificus (strain YJ016).